The chain runs to 141 residues: Large ribosomal subunit protein uL16 (141 aa).

Belongs to the universal ribosomal protein uL16 family. In terms of assembly, part of the 50S ribosomal subunit.

Its function is as follows. Binds 23S rRNA and is also seen to make contacts with the A and possibly P site tRNAs. This is Large ribosomal subunit protein uL16 from Petrotoga mobilis (strain DSM 10674 / SJ95).